A 485-amino-acid polypeptide reads, in one-letter code: Cysteine--tRNA ligase (485 aa).

Cys-27 is a Zn(2+) binding site. Positions 29 to 39 match the 'HIGH' region motif; that stretch reads ITAYDLCHIGH. Residues Cys-208, His-233, and Glu-237 each coordinate Zn(2+). Positions 265-269 match the 'KMSKS' region motif; it reads KMSKS. Lys-268 lines the ATP pocket.

This sequence belongs to the class-I aminoacyl-tRNA synthetase family. As to quaternary structure, monomer. Zn(2+) is required as a cofactor.

Its subcellular location is the cytoplasm. It catalyses the reaction tRNA(Cys) + L-cysteine + ATP = L-cysteinyl-tRNA(Cys) + AMP + diphosphate. This chain is Cysteine--tRNA ligase, found in Nitratidesulfovibrio vulgaris (strain ATCC 29579 / DSM 644 / CCUG 34227 / NCIMB 8303 / VKM B-1760 / Hildenborough) (Desulfovibrio vulgaris).